Consider the following 485-residue polypeptide: Phenylalanine--tRNA ligase alpha subunit, cytoplasmic (485 aa).

Residues T318, Q360–E362, and Y400 each bind L-phenylalanine. Residue E402 participates in Mg(2+) binding. F426 serves as a coordination point for L-phenylalanine.

The protein belongs to the class-II aminoacyl-tRNA synthetase family. Phe-tRNA synthetase alpha subunit type 2 subfamily. Tetramer of two alpha and two beta subunits. Requires Mg(2+) as cofactor.

It is found in the cytoplasm. The protein localises to the cytosol. The enzyme catalyses tRNA(Phe) + L-phenylalanine + ATP = L-phenylalanyl-tRNA(Phe) + AMP + diphosphate + H(+). The protein is Phenylalanine--tRNA ligase alpha subunit, cytoplasmic of Arabidopsis thaliana (Mouse-ear cress).